We begin with the raw amino-acid sequence, 100 residues long: Small ribosomal subunit protein bS20 (100 aa).

Basic residues predominate over residues 1–22 (MASGKPKKKNPRLASGRKRARQ). The segment at 1 to 26 (MASGKPKKKNPRLASGRKRARQGLKL) is disordered.

It belongs to the bacterial ribosomal protein bS20 family.

Its function is as follows. Binds directly to 16S ribosomal RNA. The protein is Small ribosomal subunit protein bS20 of Acidovorax ebreus (strain TPSY) (Diaphorobacter sp. (strain TPSY)).